Reading from the N-terminus, the 435-residue chain is Eukaryotic peptide chain release factor subunit 1-3 (435 aa).

A2 is modified (N-acetylalanine).

Belongs to the eukaryotic release factor 1 family. Heterodimer of two subunits, one of which binds GTP.

The protein localises to the cytoplasm. Functionally, directs the termination of nascent peptide synthesis (translation) in response to the termination codons UAA, UAG and UGA. Modulates plant growth and development. This chain is Eukaryotic peptide chain release factor subunit 1-3, found in Brassica oleracea var. botrytis (Cauliflower).